We begin with the raw amino-acid sequence, 739 residues long: DEAD-box ATP-dependent RNA helicase 32 (739 aa).

The Q motif signature appears at 71 to 99; the sequence is RKFAQLPISDKTKRGLKDAKYVDMTDVQS. In terms of domain architecture, Helicase ATP-binding spans 102-277; sequence IPHALCGRDI…RLSLRDPEYI (176 aa). ATP is bound at residue 115–122; it reads ARTGSGKT. Positions 225 to 228 match the DEAD box motif; it reads DEAD. The 159-residue stretch at 303–461 folds into the Helicase C-terminal domain; the sequence is KLDMLWSFIK…EVSRLLAALL (159 aa). Positions 643-689 form a coiled coil; it reads GAEMRKADIEDKKVDKERRREKRMKQKIKRKRGAMEDEEEEEEEDHD. The tract at residues 656–725 is disordered; it reads VDKERRREKR…GGKINTDSLS (70 aa). Residues 661–674 show a composition bias toward basic residues; sequence RREKRMKQKIKRKR. Residues 678–688 show a composition bias toward acidic residues; sequence EDEEEEEEEDH.

Belongs to the DEAD box helicase family. DDX10/DBP4 subfamily.

It catalyses the reaction ATP + H2O = ADP + phosphate + H(+). The polypeptide is DEAD-box ATP-dependent RNA helicase 32 (RH32) (Arabidopsis thaliana (Mouse-ear cress)).